Reading from the N-terminus, the 1138-residue chain is MEKREAFIQAVSKELVEEFLQFLQLDKDSSNPFSLSELLDELSRKQKEELWQRLKDLLTETLLESPVDRWQTVEVEGADDMESEHSPKMRKSIKIICAIVTVILASVSIINEHENYGALLECAVILNGILYALPESEQKLQNSIQDLCVKWWERGLPAKEDMGKTAFIMLLRRSLETKSGADVCRLWRIHQALYCFDYDWEESREIKDMLLECFINVNYIKKEEGRRFLSFLFSWNVDFIKMIHETIKNQLAGLQKSLMVHIAEIYFRAWKKASGKMLETIEYDCIQDFMFHGIHLLRRSPVHSKVREVLSYFHQQKVRQGVEEMLYRLYKPILWRGLKARNSEVRSNAALLFVEAFPIRDPNFTATEMDNEIQKQFEELYNLIEDPYPRVRSTGILGVCKISSKYWEMMPPNILVDFLKKVTGELAFDISSADVRCSVFKCLPIILDNKLSHPLLEQLLPTLRYSLHDNSEKVRVAFVDLLLKIKAVRAAKFWKICPMEDILVRLEMDSRPVSRRLVSLIFNSFLPVNQPEEVWCERCVTLIQMNRAAARRFYQYAHEHTASTNIAKLIHVIRHCLNACIQRTLREGSEAHKECEKENASVLDKTLSVNDTASMAGLLEIIVILWKNIHRSLENNKEAKIYTINKFAAVLPEYLKVFKDERCKIPLFMLMSFLPASAVPVFSCGVISVLRNQESVTGRSYCTLLDCLCSWGQVGHVLELIVDWLPTVPPQAKSNLASKRKVEINDTCSVKPELALLYMEYLLTHPKNRECLLSVPQKKLNQLLKALEGSKAELESFLQSPSGNPLNFNKATALHAFGLYCRMSVHLQYKFCSEEKIHLSILDDTGSWLENKVLPLLEDQEEEYLKLRKDVYQQIIQTYLAVCKDVVMVGLGDPKFQMQLLQRSFGIMKTVKGFFYVSLLLGILKEIAGNTIIHKTDSDEKVTVLFDLVQEVFQKMLECIACIFRKQPEESLPLFHSVQTPLHEFITTIQSWHKDTAVHHAVLSTLIAAPVVEISHQLQKVSDIEELTSPQCLHDLPPFSRCLVGVIMKSSDVVRSFVDELKACVTSGDVEGIVCLTAVLHIILVINKGKHISAKVKEVATAVYRKLKTFMEITLEEDSLERFLYESSMRTLGEFLNP.

Ser30 carries the post-translational modification Phosphoserine. Residues 459–497 (LLPTLRYSLHDNSEKVRVAFVDLLLKIKAVRAAKFWKIC) form an HEAT repeat. A Phosphothreonine modification is found at Thr1114.

Component of the condensin-2 complex, which contains the SMC2 and SMC4 heterodimer, and 3 non SMC subunits that probably regulate the complex: NCAPH2, NCAPD3 and NCAPG2. In terms of tissue distribution, expressed in spleen, lung and testis as well as in hematopoietic cell lines.

It localises to the nucleus. Regulatory subunit of the condensin-2 complex, a complex which establishes mitotic chromosome architecture and is involved in physical rigidity of the chromatid axis. Is required for early embryonic development and is essential for viability and expansion of the inner cell mass (ICM) of the implanting blastocyst. This Mus musculus (Mouse) protein is Condensin-2 complex subunit G2 (Ncapg2).